The primary structure comprises 211 residues: Envelope protein UL45 homolog (211 aa).

The Intravirion portion of the chain corresponds to 1 to 46 (MMSPTPEDDRDLVVVRGRLRMMDNGAEHDRERRSYTAWPHLCCGCT). The helical; Signal-anchor for type II membrane protein transmembrane segment at 47–67 (IGIILTMFVIATTLLLASLFA) threads the bilayer. At 68-211 (FSYMSLESGT…SSILSNAIMK (144 aa)) the chain is on the virion surface side. N-linked (GlcNAc...) asparagine; by host glycosylation is found at Asn-96 and Asn-133.

The protein belongs to the herpesviridae HHV-1 UL45 family.

The protein localises to the virion membrane. The polypeptide is Envelope protein UL45 homolog (UL45H) (Gallid herpesvirus 2 (strain Chicken/Md5/ATCC VR-987) (GaHV-2)).